The primary structure comprises 211 residues: Urease accessory protein UreE (211 aa).

The disordered stretch occupies residues 134 to 211 (FDPEGGAYAP…DHHGHGHEHK (78 aa)). Basic and acidic residues predominate over residues 147 to 202 (PSHDHAGHDHAHDSHAHHDHDHGKHAQHDHGKHDHAHHDHAAHDDHHVHDEHCGHD).

It belongs to the UreE family.

Its subcellular location is the cytoplasm. Involved in urease metallocenter assembly. Binds nickel. Probably functions as a nickel donor during metallocenter assembly. The sequence is that of Urease accessory protein UreE from Rhodopseudomonas palustris (strain BisB18).